A 179-amino-acid polypeptide reads, in one-letter code: Putative FBD-associated F-box protein At3g12840 (179 aa).

In terms of domain architecture, F-box spans 14-60 (AARINDLPDDLLATVLSFVPTKDAVATSILSKRWRPIWKRAVNLESD). Positions 101-152 (KWKQPDFVPLSLYRSLEAFEWIGFKGREKTEKKAAFHILRNACNLKTMAITT) constitute an FBD domain.

The protein is Putative FBD-associated F-box protein At3g12840 of Arabidopsis thaliana (Mouse-ear cress).